The sequence spans 429 residues: Putative zinc metalloprotease aq_1964 (429 aa).

Histidine 17 contacts Zn(2+). Glutamate 18 is an active-site residue. Zn(2+) is bound at residue histidine 21. The helical transmembrane segment at 88 to 110 (ILIALGGPLFNFLFTILVFALVY) threads the bilayer. One can recognise a PDZ domain in the interval 189–265 (TIKVPNVQKG…AIKLKILRNG (77 aa)). Transmembrane regions (helical) follow at residues 369–391 (IFNLIPLPILDGGLILLFAIEWL) and 406–428 (RVGLAIIITLTIFVFINDILRLL).

This sequence belongs to the peptidase M50B family. Zn(2+) is required as a cofactor.

It is found in the cell inner membrane. In Aquifex aeolicus (strain VF5), this protein is Putative zinc metalloprotease aq_1964.